The chain runs to 934 residues: Protocadherin gamma-C3 (934 aa).

Positions 1 to 31 are cleaved as a signal peptide; it reads MVPEAWRSGLVSTGRVVGVLLLLGALNKAST. 6 consecutive Cadherin domains span residues 32-135, 136-244, 245-352, 353-457, 458-567, and 572-685; these read VIHY…NPAF, PTQE…APVF, NQSL…APEI, TVTS…PPQS, SQSS…APQV, and PGGS…APRE. The Extracellular segment spans residues 32 to 693; sequence VIHYEIPEER…REQNKNLTFY (662 aa). Residues Asn-245, Asn-424, Asn-478, Asn-550, Asn-615, and Asn-689 are each glycosylated (N-linked (GlcNAc...) asparagine). A helical transmembrane segment spans residues 694-714; that stretch reads LLLSLILVSVGFVVTVFGVII. The Cytoplasmic segment spans residues 715 to 934; the sequence is FKVYKWKQSR…KKKSGKKEKK (220 aa). Disordered stretches follow at residues 804–843 and 904–934; these read ESAP…WPNN and ATLT…KEKK. The span at 812–843 shows a compositional bias: polar residues; the sequence is APPNTDWRFSQAQRPGTSGSQNGDDTGTWPNN. Residues 924–934 are compositionally biased toward basic residues; it reads NKKKSGKKEKK.

It is found in the cell membrane. In terms of biological role, potential calcium-dependent cell-adhesion protein. May be involved in the establishment and maintenance of specific neuronal connections in the brain. In Pan troglodytes (Chimpanzee), this protein is Protocadherin gamma-C3 (PCDHGC3).